Reading from the N-terminus, the 936-residue chain is Phosphoenolpyruvate carboxylase (936 aa).

Catalysis depends on residues His155 and Lys595.

It belongs to the PEPCase type 1 family. Homotetramer. Mg(2+) serves as cofactor. Requires Mn(2+) as cofactor.

The catalysed reaction is oxaloacetate + phosphate = phosphoenolpyruvate + hydrogencarbonate. With respect to regulation, exhibits positive allosteric property with acetyl-CoA and fructose 1,6-bisphosphate, and a negative one with L-aspartate and L-malate. Its function is as follows. Forms oxaloacetate, a four-carbon dicarboxylic acid source for the tricarboxylic acid cycle. The protein is Phosphoenolpyruvate carboxylase (ppc) of Rhodothermus marinus (Rhodothermus obamensis).